The primary structure comprises 139 residues: D-ribose pyranase (139 aa).

Histidine 20 functions as the Proton donor in the catalytic mechanism. Substrate-binding positions include aspartate 28, histidine 106, and 128 to 130; that span reads YAN.

It belongs to the RbsD / FucU family. RbsD subfamily. Homodecamer.

The protein resides in the cytoplasm. It carries out the reaction beta-D-ribopyranose = beta-D-ribofuranose. It functions in the pathway carbohydrate metabolism; D-ribose degradation; D-ribose 5-phosphate from beta-D-ribopyranose: step 1/2. Its function is as follows. Catalyzes the interconversion of beta-pyran and beta-furan forms of D-ribose. The protein is D-ribose pyranase of Escherichia coli O81 (strain ED1a).